The primary structure comprises 388 residues: Lipid-A-disaccharide synthase (388 aa).

It belongs to the LpxB family.

The enzyme catalyses a lipid X + a UDP-2-N,3-O-bis[(3R)-3-hydroxyacyl]-alpha-D-glucosamine = a lipid A disaccharide + UDP + H(+). It participates in bacterial outer membrane biogenesis; LPS lipid A biosynthesis. Functionally, condensation of UDP-2,3-diacylglucosamine and 2,3-diacylglucosamine-1-phosphate to form lipid A disaccharide, a precursor of lipid A, a phosphorylated glycolipid that anchors the lipopolysaccharide to the outer membrane of the cell. This chain is Lipid-A-disaccharide synthase, found in Burkholderia pseudomallei (strain 1710b).